The chain runs to 141 residues: Drosulfakinins (141 aa).

An N-terminal signal peptide occupies residues 1-33 (MGLRSCTHLATLFMTLWALAFCFLVVVPIPAQT). The propeptide occupies 34–73 (TSLQNAKDDRRLQELESKIGAESDQPNANLVGPSFSRFGD). The tract at residues 51-72 (KIGAESDQPNANLVGPSFSRFG) is disordered. Residue Phe82 is modified to Phenylalanine amide. A propeptide spanning residues 86-111 (VPLISRPMIPIELDLLMDNDDERTKA) is cleaved from the precursor. A Sulfotyrosine modification is found at Tyr117. Phe122 carries the phenylalanine amide modification. Tyr134 is subject to Sulfotyrosine. Position 139 is a phenylalanine amide (Phe139).

This sequence belongs to the gastrin/cholecystokinin family.

The protein localises to the secreted. Functionally, drosulfakinin-0 (DSK 0) plays diverse biological roles including regulating gut muscle contraction in adults but not in larvae. In Drosophila mauritiana (Fruit fly), this protein is Drosulfakinins.